Consider the following 263-residue polypeptide: Glutamate racemase (263 aa).

Residues 12-13 (DS) and 44-45 (YG) contribute to the substrate site. Catalysis depends on Cys75, which acts as the Proton donor/acceptor. 76–77 (NT) is a substrate binding site. Cys186 acts as the Proton donor/acceptor in catalysis. 187 to 188 (TH) contacts substrate.

This sequence belongs to the aspartate/glutamate racemases family.

It carries out the reaction L-glutamate = D-glutamate. It participates in cell wall biogenesis; peptidoglycan biosynthesis. Its function is as follows. Provides the (R)-glutamate required for cell wall biosynthesis. This chain is Glutamate racemase, found in Ectopseudomonas mendocina (strain ymp) (Pseudomonas mendocina).